The following is a 341-amino-acid chain: Protein BIG GRAIN 1-like C (341 aa).

Disordered stretches follow at residues 28 to 61 (DGLQ…LTTL) and 76 to 138 (SSTT…SDDD). Residues 52–61 (NKKDDKLTTL) are compositionally biased toward basic and acidic residues. Low complexity predominate over residues 76-92 (SSTTTTNSSDSSSFSSS). Over residues 105–138 (KLAEQGKRSGDERQRTKRTVMDNDSRLFSKSDDD) the composition is skewed to basic and acidic residues.

This sequence belongs to the BIG GRAIN 1 (BG1) plant protein family.

Its subcellular location is the cell membrane. Involved in auxin transport. Regulator of the auxin signaling pathway. This is Protein BIG GRAIN 1-like C from Arabidopsis thaliana (Mouse-ear cress).